The sequence spans 387 residues: Phosphoglycerate kinase (387 aa).

Substrate-binding positions include 21–23 (DLN), R36, 59–62 (HLGR), R113, and R146. ATP is bound by residues K197, E314, and 340–343 (GGDT).

This sequence belongs to the phosphoglycerate kinase family. In terms of assembly, monomer.

Its subcellular location is the cytoplasm. It catalyses the reaction (2R)-3-phosphoglycerate + ATP = (2R)-3-phospho-glyceroyl phosphate + ADP. It functions in the pathway carbohydrate degradation; glycolysis; pyruvate from D-glyceraldehyde 3-phosphate: step 2/5. The sequence is that of Phosphoglycerate kinase from Aliivibrio salmonicida (strain LFI1238) (Vibrio salmonicida (strain LFI1238)).